A 169-amino-acid chain; its full sequence is S-ribosylhomocysteine lyase (169 aa).

Positions 54, 58, and 128 each coordinate Fe cation.

This sequence belongs to the LuxS family. Homodimer. The cofactor is Fe cation.

The enzyme catalyses S-(5-deoxy-D-ribos-5-yl)-L-homocysteine = (S)-4,5-dihydroxypentane-2,3-dione + L-homocysteine. Functionally, involved in the synthesis of autoinducer 2 (AI-2) which is secreted by bacteria and is used to communicate both the cell density and the metabolic potential of the environment. The regulation of gene expression in response to changes in cell density is called quorum sensing. Catalyzes the transformation of S-ribosylhomocysteine (RHC) to homocysteine (HC) and 4,5-dihydroxy-2,3-pentadione (DPD). In Shewanella sp. (strain ANA-3), this protein is S-ribosylhomocysteine lyase.